We begin with the raw amino-acid sequence, 555 residues long: Sulfite reductase [ferredoxin] 2 (555 aa).

The interval 1 to 31 (MTTARPAKARNEGQWALGNREPLNPNEEMKQ) is disordered. A cross-link (3'-(S-cysteinyl)-tyrosine (Tyr-Cys)) is located at residues 69 to 161 (YTQREQGYDG…AVGLRTTEAC (93 aa)). The [4Fe-4S] cluster site is built by C417, C423, C463, and C467. C467 contributes to the siroheme binding site.

Belongs to the nitrite and sulfite reductase 4Fe-4S domain family. As to quaternary structure, monomer. Siroheme serves as cofactor. Requires [4Fe-4S] cluster as cofactor.

The enzyme catalyses hydrogen sulfide + 6 oxidized [2Fe-2S]-[ferredoxin] + 3 H2O = sulfite + 6 reduced [2Fe-2S]-[ferredoxin] + 7 H(+). Its function is as follows. Catalyzes the reduction of sulfite to sulfide, a step in the biosynthesis of sulfur-containing amino acids and cofactors. This is Sulfite reductase [ferredoxin] 2 (sir2) from Mycolicibacterium paratuberculosis (strain ATCC BAA-968 / K-10) (Mycobacterium paratuberculosis).